A 388-amino-acid chain; its full sequence is Protein kes1 (388 aa).

This sequence belongs to the OSBP family.

In terms of biological role, lipid transporter involved in lipid countertransport between the Golgi complex and membranes of the endoplasmic reticulum: specifically exchanges sterol with phosphatidylinositol 4-phosphate (PI4P), delivering sterol to the Golgi in exchange for PI4P, which is degraded by the SAC1 phosphatase in the endoplasmic reticulum. The sequence is that of Protein kes1 (kes1) from Schizosaccharomyces pombe (strain 972 / ATCC 24843) (Fission yeast).